Reading from the N-terminus, the 439-residue chain is MSQTHLSNQKFADLPLHPEVKQALAENGFEFCTPIQALSLPVLLQSKDIAGQAQTGTGKTMAFLVATFNHLLSTPVPENRQLNQPRAIIMAPTRELAIQIAKDAILLAKHSHLKVGIVYGGESYDVQRKTLDQGVDILIGTTGRIIDYVRQGIINLGGIQAVVLDEADRMFDLGFIKDIRFLFRRMPSADQRLNMLFSATLSMKVQELAYDHMNEPVKVEIAPEEKTSKNIKEEIFYPSQEDKMRLLLTLIEEDWPEKAIVFSNTKHSCENLWSWLEGDGHRVGLLTGDVPQKKRIRILEQFTQGQLDILVATDVAARGLHISDVSHVYNYDLPDDCEDYVHRIGRTGRAGNKGVSVSFACEEYALNLPAIETYINHSIPVSNYDRDALLEDIPPPVKIHRRHPAGARNLRERSGAGRPQGAHRSGGRPPRHDRTRRQP.

The Q motif motif lies at 9 to 37; that stretch reads QKFADLPLHPEVKQALAENGFEFCTPIQA. Residues 40–219 enclose the Helicase ATP-binding domain; the sequence is LPVLLQSKDI…YDHMNEPVKV (180 aa). 53-60 provides a ligand contact to ATP; the sequence is AQTGTGKT. The DEAD box motif lies at 165 to 168; the sequence is DEAD. Residues 243-390 form the Helicase C-terminal domain; the sequence is KMRLLLTLIE…VSNYDRDALL (148 aa). Residues 395 to 439 are disordered; the sequence is PPVKIHRRHPAGARNLRERSGAGRPQGAHRSGGRPPRHDRTRRQP. The span at 425–439 shows a compositional bias: basic residues; the sequence is SGGRPPRHDRTRRQP.

This sequence belongs to the DEAD box helicase family. RhlB subfamily. Component of the RNA degradosome, which is a multiprotein complex involved in RNA processing and mRNA degradation.

It localises to the cytoplasm. The enzyme catalyses ATP + H2O = ADP + phosphate + H(+). Its function is as follows. DEAD-box RNA helicase involved in RNA degradation. Has RNA-dependent ATPase activity and unwinds double-stranded RNA. The chain is ATP-dependent RNA helicase RhlB from Shewanella sp. (strain ANA-3).